Consider the following 328-residue polypeptide: Putative UDP-N-acetylglucosamine--dolichyl-phosphate N-acetylglucosaminephosphotransferase (328 aa).

The next 9 helical transmembrane spans lie at 1-21, 48-68, 78-98, 107-127, 129-149, 166-186, 192-212, 228-248, and 301-321; these read MLVSLLGILLSVIVGFVVTLI, VPVLGGIGIVAGFVAGSFTFL, IENVVVSILLSSLIIGFLGLL, ATRAFLPIFASIPLILYSVGH, IISIPFLGKVNFGILFYIIIL, LNGLGAGMGLIMALALAYIGL, SFYAGIVSIILASVLFGFLIF, FIGSVIGSIGISGYMYTALFF, and YHIVLIIWGIEILFAILAVVF.

This sequence belongs to the glycosyltransferase 4 family.

It is found in the cell membrane. It carries out the reaction a di-trans,poly-cis-dolichyl phosphate + UDP-N-acetyl-alpha-D-glucosamine = an N-acetyl-alpha-D-glucosaminyl-diphospho-di-trans,poly-cis-dolichol + UMP. Inhibited by tunicamycin. This is Putative UDP-N-acetylglucosamine--dolichyl-phosphate N-acetylglucosaminephosphotransferase (gnpTA) from Sulfolobus acidocaldarius (strain ATCC 33909 / DSM 639 / JCM 8929 / NBRC 15157 / NCIMB 11770).